We begin with the raw amino-acid sequence, 696 residues long: Verrucotoxin subunit beta (696 aa).

In terms of domain architecture, B30.2/SPRY spans 506–696 (HMPGVETIKD…GCTTESQWSN (191 aa)).

Belongs to the SNTX/VTX toxin family. Tetramer composed of 2 alpha and 2 beta subunits. Post-translationally, glycosylated. As to expression, expressed by the venom gland.

The protein localises to the secreted. This lethal (towards mice) toxin induces hemolytic, cytolytic and hypotensive activities. Inhibits calcium channels and may activate ATP-sensitive potassium channels in frog atrial heart muscle. In guinea-pig ventricular myocytes, it modulates calcium channel activity through the beta-adrenoceptor-cAMP-PKA pathway (ADRB). This chain is Verrucotoxin subunit beta, found in Synanceia verrucosa (Reef stonefish).